Reading from the N-terminus, the 638-residue chain is MLDFFTIFSKGGLVLWCFQGVSDSCTGPVNALIRSVLLQERGGNNSFTHEALTLKYKLDNQFELVFVVGFQKILTLTYVDKLIDDVHRLFRDKYRTEIQQQSALSLLNGTFDFQNDFLRLLREAEESSKIRAPTTMKKFEDSEKAKKPVRSMIETRGEKPKEKAKNSKKKGAKKEGSDGPLATSKPVPAEKSGLPVGPENGVELSKEELIRRKREEFIQKHGRGMEKSNKSTKSDAPKEKGKKAPRVWELGGCANKEVLDYSTPTTNGTPEAALSEDINLIRGTGSGGQLQDLDCSSSDDEGAAQNSTKPSATKGTLGGMFGMLKGLVGSKSLSREDMESVLDKMRDHLIAKNVAADIAVQLCESVANKLEGKVMGTFSTVTSTVKQALQESLVQILQPQRRVDMLRDIMDAQRRQRPYVVTFCGVNGVGKSTNLAKISFWLLENGFSVLIAACDTFRAGAVEQLRTHTRRLSALHPPEKHGGRTMVQLFEKGYGKDAAGIAMEAIAFARNQGFDVVLVDTAGRMQDNAPLMTALAKLITVNTPDLVLFVGEALVGNEAVDQLVKFNRALADHSMAQTPRLIDGIVLTKFDTIDDKVGAAISMTYITSKPIVFVGTGQTYCDLRSLNAKAVVAALMKA.

2 disordered regions span residues 132 to 244 (APTT…GKKA) and 283 to 316 (GTGSGGQLQDLDCSSSDDEGAAQNSTKPSATKGT). Composition is skewed to basic and acidic residues over residues 137-146 (KKFEDSEKAK) and 153-165 (IETRGEKPKEKAK). Position 177 is a phosphoserine (Ser177). Basic and acidic residues predominate over residues 204–239 (LSKEELIRRKREEFIQKHGRGMEKSNKSTKSDAPKE). Thr284 carries the phosphothreonine modification. A phosphoserine mark is found at Ser296, Ser297, and Ser298. A compositionally biased stretch (polar residues) spans 304–314 (AQNSTKPSATK). An NG domain region spans residues 419–636 (YVVTFCGVNG…NAKAVVAALM (218 aa)). 425–432 (GVNGVGKS) is a binding site for GTP. Ser473 carries the post-translational modification Phosphoserine. A GTP-binding site is contributed by 520 to 524 (DTAGR). Thr578 is subject to Phosphothreonine. 588–591 (TKFD) contributes to the GTP binding site.

The protein belongs to the GTP-binding SRP family. Heterodimer with SRPRB. Interacts with the signal recognition particle (SRP) complex subunit SRP54. As to quaternary structure, (Microbial infection) May interact with Zika virus strain Mr-766 non-structural protein 4A/NS4A. May interact with Zika virus French Polynesia 10087PF/2013 non-structural protein 4A/NS4A. In terms of assembly, (Microbial infection) May interact with Dengue virus DENV2 16681 non-structural protein 4A/NS4A.

The protein localises to the endoplasmic reticulum membrane. Functionally, component of the signal recognition particle (SRP) complex receptor (SR). Ensures, in conjunction with the SRP complex, the correct targeting of the nascent secretory proteins to the endoplasmic reticulum membrane system. Forms a guanosine 5'-triphosphate (GTP)-dependent complex with the SRP subunit SRP54. SRP receptor compaction and GTPase rearrangement drive SRP-mediated cotranslational protein translocation into the ER. In Homo sapiens (Human), this protein is Signal recognition particle receptor subunit alpha.